The primary structure comprises 106 residues: MYAVLVTGGKQYRVVQGETLRVEKLDVETGGDVTFNSVLLMGGSDGIHVGEALKDASVTAKVVAHGRARKVRIIKFRRRKHHMKHQGHRQYYTEIQITGISGPAKQ.

This sequence belongs to the bacterial ribosomal protein bL21 family. As to quaternary structure, part of the 50S ribosomal subunit. Contacts protein L20.

This protein binds to 23S rRNA in the presence of protein L20. This is Large ribosomal subunit protein bL21 from Xylella fastidiosa (strain Temecula1 / ATCC 700964).